A 137-amino-acid polypeptide reads, in one-letter code: Protein yippee-like F37A8.5 (137 aa).

The interval 1-20 (MHFRMKVLENSSKHNTPKKQ) is disordered. The Yippee domain occupies 32-129 (RCYSCIHCRA…IELAHMVKDN (98 aa)). Residues Cys36, Cys39, Cys92, and Cys95 each contribute to the Zn(2+) site.

The protein belongs to the yippee family.

The protein is Protein yippee-like F37A8.5 of Caenorhabditis elegans.